The sequence spans 54 residues: Light-harvesting protein B-880 beta chain (54 aa).

Topologically, residues 1–20 (AEDRSSLSGVSDAEAKEFHA) are cytoplasmic. Residues histidine 19 and histidine 37 each contribute to the a bacteriochlorophyll site. Residues 21–43 (LFVSSFTAFIVIAVLAHVLAWAW) form a helical membrane-spanning segment. Over 44 to 54 (RPWIPGPKGWA) the chain is Periplasmic.

The protein belongs to the antenna complex beta subunit family. The core complex is formed by different alpha and beta chains, binding bacteriochlorophyll molecules, and arranged most probably in tetrameric structures disposed around the reaction center. The non-pigmented gamma chains may constitute additional components.

The protein localises to the cell inner membrane. Antenna complexes are light-harvesting systems, which transfer the excitation energy to the reaction centers. This is Light-harvesting protein B-880 beta chain from Rhodoblastus acidophilus (Rhodopseudomonas acidophila).